Here is a 221-residue protein sequence, read N- to C-terminus: uncharacterized protein (221 aa).

Transmembrane regions (helical) follow at residues 41–63, 78–100, 141–163, and 178–200; these read TGNI…HSLI, AVMY…SSLS, ILAY…ISFL, and LILR…VNLF.

Its subcellular location is the cell membrane. This is an uncharacterized protein from Archaeoglobus fulgidus (strain ATCC 49558 / DSM 4304 / JCM 9628 / NBRC 100126 / VC-16).